The following is a 213-amino-acid chain: Orotate phosphoribosyltransferase (213 aa).

K26 lines the 5-phospho-alpha-D-ribose 1-diphosphate pocket. F34–F35 is a binding site for orotate. Residues Y72–K73, R99, K100, K103, H105, and D124–A132 contribute to the 5-phospho-alpha-D-ribose 1-diphosphate site. Orotate contacts are provided by T128 and R156.

This sequence belongs to the purine/pyrimidine phosphoribosyltransferase family. PyrE subfamily. As to quaternary structure, homodimer. Mg(2+) is required as a cofactor.

The enzyme catalyses orotidine 5'-phosphate + diphosphate = orotate + 5-phospho-alpha-D-ribose 1-diphosphate. Its pathway is pyrimidine metabolism; UMP biosynthesis via de novo pathway; UMP from orotate: step 1/2. Functionally, catalyzes the transfer of a ribosyl phosphate group from 5-phosphoribose 1-diphosphate to orotate, leading to the formation of orotidine monophosphate (OMP). This is Orotate phosphoribosyltransferase from Pseudomonas aeruginosa (strain UCBPP-PA14).